A 366-amino-acid polypeptide reads, in one-letter code: Sulfite reductase, dissimilatory-type subunit beta (366 aa).

[4Fe-4S] cluster-binding residues include Cys-140, Cys-177, Cys-178, Cys-182, Cys-220, Cys-241, Cys-244, and Cys-247. Residue Cys-182 participates in siroheme binding. Positions 232 to 262 (KTIKVDVEKCMYCGNCYTMCPGMPLFDPEND) constitute a 4Fe-4S ferredoxin-type domain.

As to quaternary structure, heterotetramer of two alpha and two beta subunits. The cofactor is [4Fe-4S] cluster. It depends on siroheme as a cofactor.

It is found in the membrane. It catalyses the reaction [DsrC protein]-trisulfide + NAD(+) + 3 H2O = [DsrC protein]-dithiol + sulfite + NADH + 3 H(+). In terms of biological role, catalyzes the reduction of sulfite to sulfide. This is the terminal oxidation reaction in sulfate respiration. This chain is Sulfite reductase, dissimilatory-type subunit beta (dsrB), found in Archaeoglobus fulgidus (strain ATCC 49558 / DSM 4304 / JCM 9628 / NBRC 100126 / VC-16).